The chain runs to 127 residues: MLVTGVDLIEIDRINQAVSRWGQRFARRVWTEAEWLRCRDSAQSLAARWAAKEAAAKALGVGLKGIGHPACAVAWREIEVANDTQGKPLLRLHGAAQQRANELGIRHWSVSLSHSGDQAIAFVVGMG.

Asp7 and Glu53 together coordinate Mg(2+).

Belongs to the P-Pant transferase superfamily. AcpS family. Mg(2+) is required as a cofactor.

Its subcellular location is the cytoplasm. It catalyses the reaction apo-[ACP] + CoA = holo-[ACP] + adenosine 3',5'-bisphosphate + H(+). In terms of biological role, transfers the 4'-phosphopantetheine moiety from coenzyme A to a Ser of acyl-carrier-protein. In Herpetosiphon aurantiacus (strain ATCC 23779 / DSM 785 / 114-95), this protein is Holo-[acyl-carrier-protein] synthase.